Consider the following 651-residue polypeptide: Acid beta-fructofuranosidase (651 aa).

Residues Met1 to Asp23 are Cytoplasmic-facing. The propeptide at Met1 to Glu103 is removed in mature form. A helical; Signal-anchor for type II membrane protein membrane pass occupies residues Leu24 to Arg44. The Lumenal segment spans residues Ala45–Asn651. Residues Val48–His76 form a disordered region. Residues Ser54–Ser72 are compositionally biased toward polar residues. Substrate-binding positions include Trp127–Asp130, Gln146, Trp154, and Trp189–Thr190. Residue Asp130 is part of the active site. Asn210 is a glycosylation site (N-linked (GlcNAc...) asparagine). A substrate-binding site is contributed by Arg253–Asp254. N-linked (GlcNAc...) asparagine glycosylation occurs at Asn275. Glu308 and Asp343 together coordinate substrate. Residues Cys500 and Cys548 are joined by a disulfide bond. An N-linked (GlcNAc...) asparagine glycan is attached at Asn620.

It belongs to the glycosyl hydrolase 32 family. May be present in two forms, a 70 kDa monomer and a heterodimer of the 30 kDa and 38 kDa subunits. The ratio of the levels of the two forms within cells appears to be regulated developmentally.

The protein resides in the membrane. It is found in the vacuole lumen. It catalyses the reaction Hydrolysis of terminal non-reducing beta-D-fructofuranoside residues in beta-D-fructofuranosides.. It functions in the pathway glycan biosynthesis; sucrose metabolism. The sequence is that of Acid beta-fructofuranosidase from Phaseolus vulgaris (Kidney bean).